We begin with the raw amino-acid sequence, 882 residues long: Alanine--tRNA ligase (882 aa).

Zn(2+)-binding residues include H570, H574, C672, and H676.

It belongs to the class-II aminoacyl-tRNA synthetase family. Zn(2+) serves as cofactor.

It localises to the cytoplasm. The enzyme catalyses tRNA(Ala) + L-alanine + ATP = L-alanyl-tRNA(Ala) + AMP + diphosphate. Functionally, catalyzes the attachment of alanine to tRNA(Ala) in a two-step reaction: alanine is first activated by ATP to form Ala-AMP and then transferred to the acceptor end of tRNA(Ala). Also edits incorrectly charged Ser-tRNA(Ala) and Gly-tRNA(Ala) via its editing domain. In Xanthomonas axonopodis pv. citri (strain 306), this protein is Alanine--tRNA ligase.